We begin with the raw amino-acid sequence, 199 residues long: NAD(P)H dehydrogenase (quinone) (199 aa).

The Flavodoxin-like domain occupies 4 to 190 (VLVLYYSAYG…AGARYQGRVI (187 aa)). Residues 10–15 (SAYGHI) and 78–80 (TRF) contribute to the FMN site. Tyr-12 provides a ligand contact to NAD(+). Substrate is bound at residue Trp-98. FMN is bound by residues 113 to 119 (STATQHG) and His-134.

Belongs to the WrbA family. Requires FMN as cofactor.

The catalysed reaction is a quinone + NADH + H(+) = a quinol + NAD(+). It catalyses the reaction a quinone + NADPH + H(+) = a quinol + NADP(+). In Bradyrhizobium sp. (strain ORS 278), this protein is NAD(P)H dehydrogenase (quinone).